The chain runs to 148 residues: Deoxyuridine 5'-triphosphate nucleotidohydrolase (148 aa).

Substrate-binding positions include 68-70, Asn81, 85-87, and Lys95; these read RSG and TID.

The protein belongs to the dUTPase family. Mg(2+) is required as a cofactor.

The enzyme catalyses dUTP + H2O = dUMP + diphosphate + H(+). It participates in pyrimidine metabolism; dUMP biosynthesis; dUMP from dCTP (dUTP route): step 2/2. In terms of biological role, this enzyme is involved in nucleotide metabolism: it produces dUMP, the immediate precursor of thymidine nucleotides and it decreases the intracellular concentration of dUTP so that uracil cannot be incorporated into DNA. This Rickettsia akari (strain Hartford) protein is Deoxyuridine 5'-triphosphate nucleotidohydrolase.